Reading from the N-terminus, the 667-residue chain is Transketolase 2 (667 aa).

Substrate is bound at residue H25. Residues H65 and G113 to L115 contribute to the thiamine diphosphate site. Residue D154 participates in Mg(2+) binding. Thiamine diphosphate is bound by residues G155 and N184. Mg(2+) is bound by residues N184 and I186. H260 contacts substrate. Position 260 (H260) interacts with thiamine diphosphate. Residue K342 is modified to N6-acetyllysine. Substrate-binding residues include R357 and S384. E410 acts as the Proton donor in catalysis. Thiamine diphosphate is bound at residue F436. Substrate is bound by residues H460, D468, and R519.

Belongs to the transketolase family. Homodimer. The cofactor is Mg(2+). It depends on Ca(2+) as a cofactor. Mn(2+) serves as cofactor. Co(2+) is required as a cofactor. Requires thiamine diphosphate as cofactor.

It catalyses the reaction D-sedoheptulose 7-phosphate + D-glyceraldehyde 3-phosphate = aldehydo-D-ribose 5-phosphate + D-xylulose 5-phosphate. Its function is as follows. Catalyzes the reversible transfer of a two-carbon ketol group from sedoheptulose-7-phosphate to glyceraldehyde-3-phosphate, producing xylulose-5-phosphate and ribose-5-phosphate. Catalyzes the transfer of a two-carbon ketol group from a ketose donor to an aldose acceptor, via a covalent intermediate with the cofactor thiamine pyrophosphate. This chain is Transketolase 2, found in Escherichia coli (strain K12).